Here is a 340-residue protein sequence, read N- to C-terminus: UPF0324 membrane protein OB3406 (340 aa).

9 helical membrane-spanning segments follow: residues 12–31 (SFYT…GVLC), 36–58 (LDIM…TIGL), 94–116 (GLHA…YSLA), 126–148 (SILT…APLV), 155–177 (TAVS…TMMY), 215–237 (IAIV…IGIY), 257–276 (IPWF…IGFL), 281–303 (VNLL…GLNV), and 315–337 (VFFA…IYVM).

It belongs to the UPF0324 family.

Its subcellular location is the cell membrane. This Oceanobacillus iheyensis (strain DSM 14371 / CIP 107618 / JCM 11309 / KCTC 3954 / HTE831) protein is UPF0324 membrane protein OB3406.